A 452-amino-acid polypeptide reads, in one-letter code: Biotin carboxylase (452 aa).

Positions 1–445 (MFKKVLIANR…TTAFVTNHLK (445 aa)) constitute a Biotin carboxylation domain. ATP contacts are provided by residues lysine 116, lysine 158, 164–165 (GG), 200–203 (EKAV), histidine 208, and histidine 235. The ATP-grasp domain maps to 120-317 (RTAMQTAGVP…LVEWQLLIAA (198 aa)). Residue lysine 237 coordinates hydrogencarbonate. Residues glutamate 275 and glutamate 288 each contribute to the ATP site. Mg(2+) contacts are provided by glutamate 275, glutamate 288, and asparagine 290. The Mn(2+) site is built by glutamate 275, glutamate 288, and asparagine 290. Residues arginine 292, valine 295, and arginine 338 each contribute to the hydrogencarbonate site. Arginine 292 is a catalytic residue. Arginine 338 is a biotin binding site.

Acetyl-CoA carboxylase is a heterohexamer of biotin carboxyl carrier protein, biotin carboxylase and the two subunits of carboxyl transferase in a 2:2 complex. Mg(2+) is required as a cofactor. Mn(2+) serves as cofactor.

The catalysed reaction is N(6)-biotinyl-L-lysyl-[protein] + hydrogencarbonate + ATP = N(6)-carboxybiotinyl-L-lysyl-[protein] + ADP + phosphate + H(+). The protein operates within lipid metabolism; malonyl-CoA biosynthesis; malonyl-CoA from acetyl-CoA: step 1/1. This protein is a component of the acetyl coenzyme A carboxylase complex; first, biotin carboxylase catalyzes the carboxylation of the carrier protein and then the transcarboxylase transfers the carboxyl group to form malonyl-CoA. The chain is Biotin carboxylase (accC) from Halalkalibacterium halodurans (strain ATCC BAA-125 / DSM 18197 / FERM 7344 / JCM 9153 / C-125) (Bacillus halodurans).